A 373-amino-acid polypeptide reads, in one-letter code: NADPH-dependent 3-keto-steroid reductase Hsd3b5 (373 aa).

Residues 10–15 (GAGGFL), Y155, and K159 each bind NADP(+). The Proton donor role is filled by K159. A helical membrane pass occupies residues 288-308 (LPLLYWLAFLLETVSFLLRPF). K350 carries the post-translational modification N6-acetyllysine.

Belongs to the 3-beta-HSD family. Expressed predominantly in male liver.

It localises to the endoplasmic reticulum membrane. The protein resides in the mitochondrion membrane. The catalysed reaction is a 3beta-hydroxysteroid + NADP(+) = a 3-oxosteroid + NADPH + H(+). The enzyme catalyses 5alpha-androstane-3beta,17beta-diol + NADP(+) = 17beta-hydroxy-5alpha-androstan-3-one + NADPH + H(+). It carries out the reaction 3beta-hydroxy-5alpha-androstan-17-one + NADP(+) = 5alpha-androstan-3,17-dione + NADPH + H(+). Its pathway is steroid metabolism. Functionally, responsible for the reduction of the oxo group on the C-3 of 5alpha-androstane steroids. Catalyzes the conversion of dihydrotestosterone to its inactive form 5alpha-androstanediol, that does not bind androgen receptor/AR. Also converts androstanedione, a precursor of testosterone and estrone, to epiandrosterone. Does not function as an isomerase. This chain is NADPH-dependent 3-keto-steroid reductase Hsd3b5, found in Rattus norvegicus (Rat).